Reading from the N-terminus, the 156-residue chain is uncharacterized protein (156 aa).

This is an uncharacterized protein from Schizosaccharomyces pombe (strain 972 / ATCC 24843) (Fission yeast).